The following is a 223-amino-acid chain: tRNA (guanine-N(7)-)-methyltransferase (223 aa).

4 residues coordinate S-adenosyl-L-methionine: D56, D81, D108, and D130. Residue D130 is part of the active site. Substrate contacts are provided by K134 and D166.

Belongs to the class I-like SAM-binding methyltransferase superfamily. TrmB family.

It catalyses the reaction guanosine(46) in tRNA + S-adenosyl-L-methionine = N(7)-methylguanosine(46) in tRNA + S-adenosyl-L-homocysteine. Its pathway is tRNA modification; N(7)-methylguanine-tRNA biosynthesis. Catalyzes the formation of N(7)-methylguanine at position 46 (m7G46) in tRNA. The polypeptide is tRNA (guanine-N(7)-)-methyltransferase (Rubrobacter xylanophilus (strain DSM 9941 / JCM 11954 / NBRC 16129 / PRD-1)).